The primary structure comprises 718 residues: Ophiobolin F synthase oblA (718 aa).

Residues 1 to 320 form a (7Z)-ophiobola-7,19-dien-3-ol synthase region; sequence MACKYSTLID…RYNGPTKFNE (320 aa). Mg(2+)-binding residues include aspartate 93 and aspartate 97. Position 93 (aspartate 93) interacts with substrate. The short motif at 93–97 is the DDXXD 1 element; that stretch reads DDVID. Residues 180-183, asparagine 224, 228-232, and 311-312 contribute to the substrate site; these read RALD, SFEKE, and RY. Positions 224–232 match the NSE/DTE motif; that stretch reads NDLFSFEKE. Residues 321-718 form a geranylfarnesyl diphosphate synthase region; that stretch reads LQLLRSEHGL…LRVMLELLKV (398 aa). The segment at 346 to 391 is disordered; sequence LVEGDCHESKPNELKRKRNGVSVDDEMRTNGTNGAKKPAHVSQPST. The span at 349–359 shows a compositional bias: basic and acidic residues; the sequence is GDCHESKPNEL. The isopentenyl diphosphate site is built by lysine 429, arginine 432, and histidine 461. Mg(2+)-binding residues include aspartate 468 and aspartate 472. Positions 468–472 match the DDXXD 2 motif; the sequence is DDLED. Dimethylallyl diphosphate is bound at residue arginine 477. Arginine 478 serves as a coordination point for isopentenyl diphosphate. The dimethylallyl diphosphate site is built by lysine 555, threonine 556, glutamine 594, asparagine 601, lysine 611, and lysine 621.

The protein in the N-terminal section; belongs to the terpene synthase family. It in the C-terminal section; belongs to the FPP/GGPP synthase family. Requires Mg(2+) as cofactor.

It catalyses the reaction isopentenyl diphosphate + (2E,6E)-farnesyl diphosphate = (2E,6E,10E)-geranylgeranyl diphosphate + diphosphate. The enzyme catalyses isopentenyl diphosphate + (2E,6E,10E)-geranylgeranyl diphosphate = (2E,6E,10E,14E)-geranylfarnesyl diphosphate + diphosphate. It carries out the reaction (2E,6E,10E,14E)-geranylfarnesyl diphosphate + H2O = ophiobolin F + diphosphate. The protein operates within secondary metabolite biosynthesis; terpenoid biosynthesis. Its function is as follows. Bifunctional sesterterpene synthase; part of the gene cluster that mediates the biosynthesis of the sesterterpenes ophiobolins, fungal phytotoxins with potential anti-cancer activities. The first step of the pathway is performed by the sesterterpene synthase oblA that possesses both prenyl transferase and terpene cyclase activity, converting isopentenyl diphosphate and dimethylallyl diphosphate into geranylfarnesyl diphosphate (GFPP) and further converting GFPP into ophiobolin F, respectively. Other sesterterpenoids (C(25) terpenoids) are found as minor products of oblA. It is expected that ophiobolin F is then oxidized to ophiobolin A via ophiobolin C and ophiobolin B intermediates by the combined action of the cytochrome P450 monooxygenase oblB and the FAD-dependent oxidoreductase oblC. Although oblB catalyzes multistep oxygenations at C5 and C21/C7 in a relatively efficient manner, it is unable to convert ophiobolin F to ophiobolin C and produces instead several unexpected derivatives. In Aspergillus clavatus (strain ATCC 1007 / CBS 513.65 / DSM 816 / NCTC 3887 / NRRL 1 / QM 1276 / 107), this protein is Ophiobolin F synthase oblA.